The primary structure comprises 1338 residues: MDMAPDELDELRGSAQRALEQAIDFSFSCQQDDGHWVAPVSADATFTAQYVMFKHAIPALNLDISGAEAAALRHWLLGDQNAAEGSWGLAPGLPGNLSTTVEAYLALRLLGVPSSNPALQQARRFVLAHGGISRVRFFTRFFLATFGLFPWSAIPQMPAELILMPKWAPLNIYVLSSWARSTLIPILVVRHHEPLYPLPNAQSDPNSGFLDELWLDPTNKEVPFAPPLWDMFHGRDRDVVKLAFTLGDKALAQIGGLKKGPQRRLALRRCIEWLLEHQEETGDWAGFFPPMHGSVWALLLEGFSLEHDVVKRGLEALERLAVNDESGKWLQSTVSPCWDTALMVKALCDAGLGLGGAEAAKGNRHARVTTAVDWVRSLQLLGPQGDWRVYSRNQRPGGWSFEYNNTWYPDVDDTAVVVMMLVTHDPAAVESNAVEMGIEWILGMQNHDGGWGAFDTNNDALWLHKIPFSDMDSLVDPSTSDVTGRMLECFGMLLTHRKGGLRLRPELSQRLHESAQKALAFLFREQTASGAWWGRWGCNYNYGTTNVLRGLPAFCGDKEVARAALRAVLWLEKCQNKDGGWGETLLSYGHPDLAGKGPSTAAHTAWALDALLRFRPASDPALQKGVQWLVSNQVPKTEEKRHWASWPSDLYVGTGFPNVLYLGYPFYHHHFAISALARFLDRTDEPDQDRDLPLLMTRHVVTTLTRHDILLMVLGSRGDIDVFLSIAGKLAKNRHRVRVATHPAHQQLVEAHGFEFYDVGGGPDEFAQVLGREPNLLWSVIRGDLGRLRQSLCRTFARFWEAGYGSNNTRNARNADPKANGIADSRPFVADLIVSTPATTVHVHAAETLRAPLVLIAAQPTLPTREFPHVFTMNKPRYSPGSWWNYATFFFLELLNWLAMGSFVNKLRVHTYKMKPLCWVWATQDFLTAKIPLVCLWSSNVVPRPPEWHDEVMVAGSTTLAQVDQFTPPLSLLEFLNADMEKPTVVVSFGSMFIADPPALISAIASAAAQVRAKVVICRSWRWKLESSLASLPSHTYVADAIPHSWLLPRVDGFVHHGGAGHTAAGLRAGVPMLITPFFLDQHFWAAKVHNLGLGPEPLEIMMRAGTVAGIQTHQGKMQFAQSMQDLLSGQYSRRCAEMSERVRAETDGANVAADVIERELGSALARSGHCAVVPALPAQWQHAESGLALCGVAAASLVTSGMLDWDDLDAITRIDWIARRQKDPKSRLHAICFVADWLGHAFGMLLAVAGWLLQLVGDVRSVGRVKPHHNTDPIRLAMMERSMFDLNFAKQGLAEAELKGGAFEELLARRWRAAVAAAFERRMERTGNMLLGEGCQG.

Residues 1–687 (MDMAPDELDE…RFLDRTDEPD (687 aa)) are terpenne cyclase. PFTB repeat units follow at residues 19–61 (LEQA…PALN), 69–111 (AAAL…RLLG), and 267–307 (LRRC…SLEH). Residue Asp-412 is the Proton donor of the active site. 3 PFTB repeats span residues 434 to 475 (VEMG…DSLV), 515 to 556 (AQKA…AFCG), and 564 to 615 (ALRA…LRFR). The interval 688-1338 (QDRDLPLLMT…NMLLGEGCQG (651 aa)) is glycosyltransferase.

In the N-terminal section; belongs to the terpene cyclase/mutase family. This sequence in the C-terminal section; belongs to the glycosyltransferase 28 family.

It carries out the reaction (S)-2,3-epoxysqualene = isomotiol. The enzyme catalyses isomotiol + UDP-alpha-D-glucose = 3-O-(beta-D-glucopyranosyl)-isomotiol + UDP + H(+). It catalyses the reaction 2alpha-hydroxyisomotiol + UDP-alpha-D-glucose = 3-O-(beta-D-glucopyranosyl)-2alpha-hydroxyisomotiol + UDP + H(+). It participates in secondary metabolite biosynthesis; terpenoid biosynthesis. In terms of biological role, terpene cyclase-glycosyl transferase fusion protein; part of the gene cluster that mediates the biosynthesis of the enfumafungin-type antibiotic, fuscoatroside. Within the pathway, fsoA plays two important roles, the cyclization of 2,3(S)-oxidosqualene into isomotiol via its terpene cyclase (TC) domain and the C3 glycosylation of several intermediates via its glycosyltransferase (GT) domain. The fuscoatroside biosynthesis is initiated by the cyclization of 2,3(S)-oxidosqualene through FsoA's TC domain, leading to the formation of the fernane skeleton isomotiol, harboring a fernane triterpene skeleton with a C8-C9 double bond. Subsequently, C2-alpha-hydroxylation mediated by fsoD results in the production of 2-alpha-hydroxy-isomotiol, which is further acetylated by fsoF. The GT domain of FsoA may convert isomotiol, 2-alpha-hydroxy-isomotiol, and the acetylated derivative of 2-alpha-hydroxy-isomotiol into their corresponding glycosides 3-O-(beta-D-glucopyranosyl)-isomotiol, 3-O-(beta-D-glucopyranosyl)-2-alpha-hydroxy-isomotiol, and 3-O-(beta-D-glucopyranosyl)-2-alpha-acetoxy-isomotiol, which then undergo oxidative cleavage under the action of fsoE to form s 2-deacetoxy-fuscoatroside, 2-deacetyl-fuscoatroside, and fuscoatroside, respectively. Although hydroxylation followed by acetylation of 3-O-(beta-D-glucopyranosyl)-isomotiol and 2-deacetoxy-fuscoatroside by fsoD and fsoF could not be ruled out, this process is likely to occur with difficulty due to bulky steric hindrance caused by the presence of a glycan at C3 in these compounds. Interestingly, fsoE can also utilize the aglycones isomotiol and 2-alpha-hydroxy-isomotiol as substrates to generate 19-beta-hydroxy-isomotiol and 2-alpha,19-beta-dihydroxy-isomotiol, respectively. These reactions occur with lower efficiency. Finally, fsoE can further convert 2-alpha,19-beta-dihydroxy-isomotiol into 2-alpha-hydroxy-ismotiol-19-one and 2-alpha-hydroxy-ismotiol-19-one into 2-deacetyl-3-deglucopyranosyl-fuscoatroside. The chain is Terpene cyclase-glycosyl transferase fusion protein fsoA from Humicola fuscoatra.